The following is a 101-amino-acid chain: MAKVSLIKKNESRKKKSQSLHNKRVALKSKIYDKNISLEERFSLVMLLAQLPRNSSPTRIRNRCELTGRPRGVTRKFGISRNKLRELIGRGVVPGVVKSSW.

The interval 1-21 is disordered; it reads MAKVSLIKKNESRKKKSQSLH. A compositionally biased stretch (basic residues) spans 11 to 21; it reads ESRKKKSQSLH.

This sequence belongs to the universal ribosomal protein uS14 family. As to quaternary structure, part of the 30S ribosomal subunit. Contacts proteins S3 and S10.

Binds 16S rRNA, required for the assembly of 30S particles and may also be responsible for determining the conformation of the 16S rRNA at the A site. The protein is Small ribosomal subunit protein uS14 of Rickettsia canadensis (strain McKiel).